A 252-amino-acid polypeptide reads, in one-letter code: Protein IRON-RELATED TRANSCRIPTION FACTOR 3 (252 aa).

Residues 36–49 form a basic motif region; that stretch reads PRKVHKSEREKLKR. The bHLH domain occupies 36-86; sequence PRKVHKSEREKLKRGHLNDLFGELGNMLEADRQSNGKACILTDTTRILRDL. The interval 50 to 86 is helix-loop-helix motif; the sequence is GHLNDLFGELGNMLEADRQSNGKACILTDTTRILRDL. The stretch at 76-131 forms a coiled coil; that stretch reads LTDTTRILRDLLSQVKSLRQENSTLQNESNYVTMERNELQDENGALRSEISDLQNE. The segment at 135–252 is disordered; the sequence is RATGSPGWGH…GLPRMEDEQM (118 aa). A compositionally biased stretch (low complexity) spans 162–176; it reads PSQQPMQPSPMTTST. The span at 208 to 219 shows a compositional bias: acidic residues; sequence PAEDPEPSEDQE.

This sequence belongs to the bHLH protein family.

It localises to the nucleus. In terms of biological role, transcription factor that acts as a negative regulator of the iron deficiency response. Suppresses the induction of iron deficiency responsive genes, such as NAS1, NAS2, IRO2, IRT1, YSL15, and NRAMP1. This Oryza sativa subsp. japonica (Rice) protein is Protein IRON-RELATED TRANSCRIPTION FACTOR 3.